The chain runs to 392 residues: Na(+)/H(+) antiporter NhaA (392 aa).

11 helical membrane-spanning segments follow: residues 14 to 34 (AGGL…NSPL), 59 to 79 (LLLW…GLEV), 95 to 115 (IFPA…YLLF), 125 to 145 (GWAI…ALLG), 154 to 174 (VFLL…IALF), 179 to 199 (VSLQ…YMNW), 213 to 233 (LVLW…GVIV), 254 to 274 (GLHP…NAGV), 287 to 307 (LLPL…IFLF), 328 to 348 (IFAV…IASL), and 363 to 383 (LGIL…LRLA).

Belongs to the NhaA Na(+)/H(+) (TC 2.A.33) antiporter family.

It localises to the cell inner membrane. It carries out the reaction Na(+)(in) + 2 H(+)(out) = Na(+)(out) + 2 H(+)(in). Na(+)/H(+) antiporter that extrudes sodium in exchange for external protons. This Yersinia enterocolitica serotype O:8 / biotype 1B (strain NCTC 13174 / 8081) protein is Na(+)/H(+) antiporter NhaA.